Here is a 279-residue protein sequence, read N- to C-terminus: Vomeronasal type-1 receptor A8 (279 aa).

Over 1-19 (MNKDHTLYCSVYIRNAFFS) the chain is Extracellular. Residues 20 to 40 (EIGIGISANSCLLLFHTFMFI) traverse the membrane as a helical segment. At 41-49 (RGHRPRLTD) the chain is on the cytoplasmic side. A helical transmembrane segment spans residues 50-70 (LPIGFVALIHLVMLLLAAYIT). Residues 71–93 (EDFFMSSGGWDDITCKLVIFLHR) lie on the Extracellular side of the membrane. A disulfide bridge links cysteine 85 with cysteine 172. The helical transmembrane segment at 94-114 (FFRSLSVCATCLLSVFQAIIL) threads the bilayer. Residues 115–134 (CPQSSHLAKLKQNSPHQLSY) are Cytoplasmic-facing. Residues 135–155 (FFIFLSIFYTSISSQILIAAI) traverse the membrane as a helical segment. Residues 156 to 159 (PTQN) are Extracellular-facing. Asparagine 159 carries an N-linked (GlcNAc...) asparagine glycan. The helical transmembrane segment at 160-180 (ITFVNLIYITNSCSFLPLSSS) threads the bilayer. Over 181–187 (MQHTFST) the chain is Cytoplasmic. A helical transmembrane segment spans residues 188–208 (LLTFRNVFVIGLMGLSTCYMA). The Extracellular segment spans residues 209–238 (TLLCRHKTRSQRLQNSKLSPKATPEQRALR). A helical transmembrane segment spans residues 239–259 (TILMLMSFFLLMSTFDSIISY). Over 260–279 (SRTIITGKSTALLCPDSCRS) the chain is Cytoplasmic.

Belongs to the G-protein coupled receptor 1 family. In terms of tissue distribution, expressed in a subset of sensory neurons located in the apical layer of the vomeronasal organ.

It localises to the cell membrane. Putative pheromone receptor implicated in the regulation of social and reproductive behavior. The chain is Vomeronasal type-1 receptor A8 from Mus musculus (Mouse).